Here is a 910-residue protein sequence, read N- to C-terminus: Leucine--tRNA ligase (910 aa).

The 'HIGH' region motif lies at 42–52; that stretch reads PYPSGKLHMGH. The 'KMSKS' region motif lies at 658–662; the sequence is TMSKS. An ATP-binding site is contributed by Lys-661.

It belongs to the class-I aminoacyl-tRNA synthetase family.

The protein resides in the cytoplasm. It carries out the reaction tRNA(Leu) + L-leucine + ATP = L-leucyl-tRNA(Leu) + AMP + diphosphate. The chain is Leucine--tRNA ligase from Acidovorax ebreus (strain TPSY) (Diaphorobacter sp. (strain TPSY)).